The primary structure comprises 54 residues: Large ribosomal subunit protein bL33 (54 aa).

This sequence belongs to the bacterial ribosomal protein bL33 family.

This chain is Large ribosomal subunit protein bL33, found in Opitutus terrae (strain DSM 11246 / JCM 15787 / PB90-1).